Reading from the N-terminus, the 183-residue chain is uncharacterized protein (183 aa).

Positions 1–23 (MSAFKKSLLVAGVAMILSNNVFA) are cleaved as a signal peptide. Cys-41 and Cys-80 are joined by a disulfide.

It belongs to the fimbrial protein family.

It is found in the fimbrium. This is an uncharacterized protein from Escherichia coli (strain K12).